Here is an 87-residue protein sequence, read N- to C-terminus: Small ribosomal subunit protein bS21m (87 aa).

Belongs to the bacterial ribosomal protein bS21 family. In terms of assembly, component of the mitochondrial ribosome small subunit (28S) which comprises a 12S rRNA and about 30 distinct proteins.

Its subcellular location is the mitochondrion. This Mus musculus (Mouse) protein is Small ribosomal subunit protein bS21m (Mrps21).